Reading from the N-terminus, the 612-residue chain is UvrABC system protein C (612 aa).

A GIY-YIG domain is found at 18 to 96 (TRPGVYRMMD…IKTLKPPYNI (79 aa)). One can recognise a UVR domain in the interval 208-243 (PEIINETIQQMEVASAQLDFERAAVLRDQVDYLRRV).

The protein belongs to the UvrC family. In terms of assembly, interacts with UvrB in an incision complex.

Its subcellular location is the cytoplasm. Functionally, the UvrABC repair system catalyzes the recognition and processing of DNA lesions. UvrC both incises the 5' and 3' sides of the lesion. The N-terminal half is responsible for the 3' incision and the C-terminal half is responsible for the 5' incision. The chain is UvrABC system protein C from Hahella chejuensis (strain KCTC 2396).